Consider the following 455-residue polypeptide: Ornithine decarboxylase (455 aa).

An N6-(pyridoxal phosphate)lysine modification is found at lysine 67. Residues serine 197, glycine 234, and 271-274 (EPGR) contribute to the pyridoxal 5'-phosphate site. Serine 297 is modified (phosphoserine; by CK2). 325 to 326 (YD) is a binding site for substrate. The active-site Proton donor; shared with dimeric partner is cysteine 354. S-nitrosocysteine is present on cysteine 354. Position 355 (aspartate 355) interacts with substrate. A pyridoxal 5'-phosphate-binding site is contributed by tyrosine 383.

This sequence belongs to the Orn/Lys/Arg decarboxylase class-II family. Homodimer. Only the dimer is catalytically active, as the active sites are constructed of residues from both monomers. Requires pyridoxal 5'-phosphate as cofactor.

The catalysed reaction is L-ornithine + H(+) = putrescine + CO2. It functions in the pathway amine and polyamine biosynthesis; putrescine biosynthesis via L-ornithine pathway; putrescine from L-ornithine: step 1/1. Inhibited by antizymes (AZs) OAZ1, OAZ2 and OAZ3 in response to polyamine levels. AZs inhibit the assembly of the functional homodimer by binding to ODC monomers. Additionally, OAZ1 targets ODC monomers for ubiquitin-independent proteolytic destruction by the 26S proteasome. Catalyzes the first and rate-limiting step of polyamine biosynthesis that converts ornithine into putrescine, which is the precursor for the polyamines, spermidine and spermine. Polyamines are essential for cell proliferation and are implicated in cellular processes, ranging from DNA replication to apoptosis. This chain is Ornithine decarboxylase (ODC1), found in Cricetulus griseus (Chinese hamster).